The following is a 513-amino-acid chain: ATP synthase subunit alpha (513 aa).

An ATP-binding site is contributed by Gly169–Thr176.

The protein belongs to the ATPase alpha/beta chains family. In terms of assembly, F-type ATPases have 2 components, CF(1) - the catalytic core - and CF(0) - the membrane proton channel. CF(1) has five subunits: alpha(3), beta(3), gamma(1), delta(1), epsilon(1). CF(0) has three main subunits: a(1), b(2) and c(9-12). The alpha and beta chains form an alternating ring which encloses part of the gamma chain. CF(1) is attached to CF(0) by a central stalk formed by the gamma and epsilon chains, while a peripheral stalk is formed by the delta and b chains.

It localises to the cell inner membrane. It catalyses the reaction ATP + H2O + 4 H(+)(in) = ADP + phosphate + 5 H(+)(out). Functionally, produces ATP from ADP in the presence of a proton gradient across the membrane. The alpha chain is a regulatory subunit. This chain is ATP synthase subunit alpha, found in Haemophilus influenzae (strain ATCC 51907 / DSM 11121 / KW20 / Rd).